We begin with the raw amino-acid sequence, 790 residues long: Phenylalanine--tRNA ligase beta subunit (790 aa).

The tRNA-binding domain occupies 39–154; sequence PDSLNTVVTG…ADTPLGESAC (116 aa). The 80-residue stretch at 404–483 folds into the B5 domain; sequence FSPLSLSVRP…FVQKTQKILP (80 aa). Positions 457, 463, 466, and 467 each coordinate Mg(2+). Residues 694-790 enclose the FDX-ACB domain; the sequence is PIYPASSRDI…KLANIGQGNS (97 aa).

This sequence belongs to the phenylalanyl-tRNA synthetase beta subunit family. Type 1 subfamily. In terms of assembly, tetramer of two alpha and two beta subunits. Mg(2+) is required as a cofactor.

It is found in the cytoplasm. The catalysed reaction is tRNA(Phe) + L-phenylalanine + ATP = L-phenylalanyl-tRNA(Phe) + AMP + diphosphate + H(+). This Chlamydia trachomatis serovar D (strain ATCC VR-885 / DSM 19411 / UW-3/Cx) protein is Phenylalanine--tRNA ligase beta subunit (pheT).